The chain runs to 61 residues: Short neurotoxin 4 (61 aa).

Disulfide bonds link cysteine 3–cysteine 23, cysteine 17–cysteine 40, cysteine 42–cysteine 53, and cysteine 54–cysteine 59.

The protein belongs to the three-finger toxin family. Short-chain subfamily. Type I alpha-neurotoxin sub-subfamily. Expressed by the venom gland.

It localises to the secreted. Its function is as follows. Binds to muscle nicotinic acetylcholine receptor (nAChR) and inhibit acetylcholine from binding to the receptor, thereby impairing neuromuscular transmission. This Naja annulifera (Banded Egyptian cobra) protein is Short neurotoxin 4.